Here is a 212-residue protein sequence, read N- to C-terminus: ATP-dependent dethiobiotin synthetase BioD (212 aa).

13-18 (GIGKTV) serves as a coordination point for ATP. Mg(2+) is bound at residue Thr-17. Lys-33 is an active-site residue. Position 37 (Ser-37) interacts with substrate. Glu-100 lines the Mg(2+) pocket. Residues 100-103 (EGAG) and 184-186 (PRL) contribute to the ATP site.

It belongs to the dethiobiotin synthetase family. Homodimer. Requires Mg(2+) as cofactor.

The protein resides in the cytoplasm. It catalyses the reaction (7R,8S)-7,8-diammoniononanoate + CO2 + ATP = (4R,5S)-dethiobiotin + ADP + phosphate + 3 H(+). It participates in cofactor biosynthesis; biotin biosynthesis; biotin from 7,8-diaminononanoate: step 1/2. Catalyzes a mechanistically unusual reaction, the ATP-dependent insertion of CO2 between the N7 and N8 nitrogen atoms of 7,8-diaminopelargonic acid (DAPA, also called 7,8-diammoniononanoate) to form a ureido ring. This Rhodopseudomonas palustris (strain ATCC BAA-98 / CGA009) protein is ATP-dependent dethiobiotin synthetase BioD.